The primary structure comprises 77 residues: U8-lycotoxin-Ls1n (77 aa).

The N-terminal stretch at 1–20 (MKLMIFTGLVLFAIVSLIEA) is a signal peptide. A propeptide spanning residues 21 to 26 (QAENEK) is cleaved from the precursor.

Belongs to the neurotoxin 19 (CSTX) family. 08 (U8-Lctx) subfamily. Post-translationally, contains 4 disulfide bonds. Expressed by the venom gland.

It is found in the secreted. This Lycosa singoriensis (Wolf spider) protein is U8-lycotoxin-Ls1n.